Here is a 122-residue protein sequence, read N- to C-terminus: Large ribosomal subunit protein uL14 (122 aa).

It belongs to the universal ribosomal protein uL14 family. In terms of assembly, part of the 50S ribosomal subunit. Forms a cluster with proteins L3 and L19. In the 70S ribosome, L14 and L19 interact and together make contacts with the 16S rRNA in bridges B5 and B8.

Binds to 23S rRNA. Forms part of two intersubunit bridges in the 70S ribosome. This is Large ribosomal subunit protein uL14 from Bdellovibrio bacteriovorus (strain ATCC 15356 / DSM 50701 / NCIMB 9529 / HD100).